The following is a 362-amino-acid chain: Chorismate synthase (362 aa).

NADP(+) contacts are provided by Arg-48 and Arg-54. FMN is bound by residues 125–127, 238–239, Gly-286, 301–305, and Arg-327; these read RSS, NA, and KPTSS.

This sequence belongs to the chorismate synthase family. Homotetramer. The cofactor is FMNH2.

It carries out the reaction 5-O-(1-carboxyvinyl)-3-phosphoshikimate = chorismate + phosphate. It functions in the pathway metabolic intermediate biosynthesis; chorismate biosynthesis; chorismate from D-erythrose 4-phosphate and phosphoenolpyruvate: step 7/7. Functionally, catalyzes the anti-1,4-elimination of the C-3 phosphate and the C-6 proR hydrogen from 5-enolpyruvylshikimate-3-phosphate (EPSP) to yield chorismate, which is the branch point compound that serves as the starting substrate for the three terminal pathways of aromatic amino acid biosynthesis. This reaction introduces a second double bond into the aromatic ring system. The chain is Chorismate synthase from Granulibacter bethesdensis (strain ATCC BAA-1260 / CGDNIH1).